Reading from the N-terminus, the 87-residue chain is Small ribosomal subunit protein bS21m (87 aa).

The protein belongs to the bacterial ribosomal protein bS21 family. Component of the mitochondrial ribosome small subunit (28S) which comprises a 12S rRNA and about 30 distinct proteins.

The protein localises to the mitochondrion. The protein is Small ribosomal subunit protein bS21m (Mrps21) of Mus musculus (Mouse).